Reading from the N-terminus, the 436-residue chain is UPF0597 protein YhaM (436 aa).

Belongs to the UPF0597 family.

This Shigella dysenteriae serotype 1 (strain Sd197) protein is UPF0597 protein YhaM.